The primary structure comprises 1140 residues: Kinesin-like protein KIN-14O (1140 aa).

Over residues 1–12 the composition is skewed to basic and acidic residues; the sequence is MLESEFQREHAF. Disordered stretches follow at residues 1–37, 50–81, 161–217, and 323–347; these read MLES…ADDD, NPAE…DEDS, SPGS…GGHK, and ASGT…KEED. Positions 161-179 are enriched in low complexity; sequence SPGSSHGGSTPRSPFSPSS. Over residues 180–193 the composition is skewed to basic and acidic residues; sequence PRERHNKGLADSRF. The span at 197-209 shows a compositional bias: polar residues; it reads LPNSSALDPSSPG. A coiled-coil region spans residues 327–546; sequence SEENETEKSK…KAKEMEEKSE (220 aa). The segment covering 332–347 has biased composition (basic and acidic residues); that stretch reads TEKSKLEEKKKDKEED. The 321-residue stretch at 632-952 folds into the Kinesin motor domain; it reads NIRVYCRVRP…LKFAERVSGV (321 aa). An ATP-binding site is contributed by 716 to 723; the sequence is GQTGSGKT. Positions 1002–1018 are enriched in polar residues; it reads LGQSDDFNSEAGDSQLS. Disordered regions lie at residues 1002–1021 and 1028–1140; these read LGQS…SIED and DYTR…KRWS. Basic and acidic residues predominate over residues 1066 to 1078; it reads EGRKPLKISDKPK. Polar residues predominate over residues 1099-1130; it reads TMRTTNIAKATSALLSPSSQGMKKTGSASNFL.

It belongs to the TRAFAC class myosin-kinesin ATPase superfamily. Kinesin family. KIN-14 subfamily.

The chain is Kinesin-like protein KIN-14O from Arabidopsis thaliana (Mouse-ear cress).